Consider the following 316-residue polypeptide: Ribosomal protein L11 methyltransferase (316 aa).

Residues T157, G178, D200, and N243 each contribute to the S-adenosyl-L-methionine site.

It belongs to the methyltransferase superfamily. PrmA family.

Its subcellular location is the cytoplasm. It carries out the reaction L-lysyl-[protein] + 3 S-adenosyl-L-methionine = N(6),N(6),N(6)-trimethyl-L-lysyl-[protein] + 3 S-adenosyl-L-homocysteine + 3 H(+). Methylates ribosomal protein L11. This is Ribosomal protein L11 methyltransferase from Streptococcus pneumoniae (strain ATCC 700669 / Spain 23F-1).